A 984-amino-acid chain; its full sequence is Probable beta-galactosidase C (984 aa).

The signal sequence occupies residues 1–19; the sequence is MRLLNIFTTLCLLLWSGAA. 5 residues coordinate substrate: Tyr-78, Asn-123, Ala-124, Glu-125, and Asn-183. The Proton donor role is filled by Glu-184. Substrate is bound at residue Tyr-247. A disulfide bridge links Cys-253 with Cys-300. Asn-272 is a glycosylation site (N-linked (GlcNAc...) asparagine). Glu-283 acts as the Nucleophile in catalysis. Tyr-349 contacts substrate. N-linked (GlcNAc...) asparagine glycosylation is found at Asn-387, Asn-433, Asn-462, Asn-516, Asn-583, Asn-599, Asn-673, Asn-716, Asn-756, Asn-860, and Asn-870.

This sequence belongs to the glycosyl hydrolase 35 family.

Its subcellular location is the secreted. It catalyses the reaction Hydrolysis of terminal non-reducing beta-D-galactose residues in beta-D-galactosides.. Its function is as follows. Cleaves beta-linked terminal galactosyl residues from gangliosides, glycoproteins, and glycosaminoglycans. In Sclerotinia sclerotiorum (strain ATCC 18683 / 1980 / Ss-1) (White mold), this protein is Probable beta-galactosidase C (lacC).